A 475-amino-acid polypeptide reads, in one-letter code: NAD-dependent histone deacetylase sir2 (475 aa).

Positions 1–12 are enriched in polar residues; sequence MASNPLDNNMPT. The interval 1–35 is disordered; that stretch reads MASNPLDNNMPTTPVEEKIPVASYSPSSSGSSSGA. The segment covering 20-35 has biased composition (low complexity); sequence PVASYSPSSSGSSSGA. Serine 55 is subject to Phosphoserine. Positions 139-436 constitute a Deacetylase sirtuin-type domain; that stretch reads KLPHFNTFED…AGWLNELQAL (298 aa). Residues 164–183 and 246–249 each bind NAD(+); these read GAGISTSLGILDFRSDNGFY and QNID. Catalysis depends on histidine 266, which acts as the Proton acceptor. Zn(2+) contacts are provided by cysteine 274, cysteine 277, cysteine 298, and cysteine 301. NAD(+) contacts are provided by residues 373–375, 398–400, and cysteine 416; these read GTS and SRT.

Belongs to the sirtuin family. Class I subfamily. It depends on Zn(2+) as a cofactor.

It is found in the nucleus. The protein resides in the chromosome. Its subcellular location is the centromere. It localises to the telomere. The enzyme catalyses N(6)-acetyl-L-lysyl-[protein] + NAD(+) + H2O = 2''-O-acetyl-ADP-D-ribose + nicotinamide + L-lysyl-[protein]. Functionally, involved in silencing within the mating-type region, at the telomeres, and according to PubMed:12867036 also within centromeric DNA regions. Required for the localization of swi6 to the telomeres, silent mating type region, and according to PubMed:12867036 to the centromeric DNA regions. According to PubMed:15545655 not required for the localization of swi6 to centromeric foci. Deacetylates histone H3 on 'Lys-9' and 'Lys-16' of histone H4. This has a direct role in heterochromatin assembly. The protein is NAD-dependent histone deacetylase sir2 (sir2) of Schizosaccharomyces pombe (strain 972 / ATCC 24843) (Fission yeast).